A 627-amino-acid chain; its full sequence is DNA mismatch repair protein MutL (627 aa).

Over residues Asp-354 to Glu-364 the composition is skewed to basic and acidic residues. Residues Asp-354–Met-374 are disordered.

The protein belongs to the DNA mismatch repair MutL/HexB family.

This protein is involved in the repair of mismatches in DNA. It is required for dam-dependent methyl-directed DNA mismatch repair. May act as a 'molecular matchmaker', a protein that promotes the formation of a stable complex between two or more DNA-binding proteins in an ATP-dependent manner without itself being part of a final effector complex. Overexpression of mutSL partially suppresses the high spontaneous mutation frequency of a ytkD/mutM/mutY triple disruption which lacks the system required to prevent damage by oxidized guanine (8-oxo-dGTP). This suggests that MutSL also functions to repair mismatches due to oxidative stress in both growing and stationary phase cells. The sequence is that of DNA mismatch repair protein MutL from Bacillus subtilis (strain 168).